The following is a 154-amino-acid chain: MTIWIDADACPRVIKEIVFRASERLNLPVMLVANKPLAKHHAGLISSVVVDDGPDVADDYIAEQATAQDLVITADIPLAARIVAKGAVGIDPRGELYNEDNVGERLSMRDLMQSLRSEGLVQGGPAQFGMTDRQRFASSLDRVLTRMMREAKKQ.

It belongs to the UPF0178 family.

This Trichlorobacter lovleyi (strain ATCC BAA-1151 / DSM 17278 / SZ) (Geobacter lovleyi) protein is UPF0178 protein Glov_0658.